The chain runs to 397 residues: Enoyl-[acyl-carrier-protein] reductase [NADH] (397 aa).

Residues 48-53 (GASTGY), 74-75 (FE), 111-112 (DA), and 139-140 (LA) each bind NAD(+). Tyrosine 225 provides a ligand contact to substrate. Tyrosine 235 functions as the Proton donor in the catalytic mechanism. NAD(+)-binding positions include lysine 244 and 273-275 (VVT).

Belongs to the TER reductase family. Monomer.

The enzyme catalyses a 2,3-saturated acyl-[ACP] + NAD(+) = a (2E)-enoyl-[ACP] + NADH + H(+). Its pathway is lipid metabolism; fatty acid biosynthesis. Functionally, involved in the final reduction of the elongation cycle of fatty acid synthesis (FAS II). Catalyzes the reduction of a carbon-carbon double bond in an enoyl moiety that is covalently linked to an acyl carrier protein (ACP). The chain is Enoyl-[acyl-carrier-protein] reductase [NADH] from Edwardsiella ictaluri (strain 93-146).